A 295-amino-acid chain; its full sequence is Pyridoxal 5'-phosphate synthase subunit PdxS (295 aa).

Asp-25 lines the D-ribose 5-phosphate pocket. Lys-82 functions as the Schiff-base intermediate with D-ribose 5-phosphate in the catalytic mechanism. Gly-154 contacts D-ribose 5-phosphate. Arg-166 is a D-glyceraldehyde 3-phosphate binding site. D-ribose 5-phosphate is bound by residues Gly-215 and 236-237; that span reads GS.

Belongs to the PdxS/SNZ family. In terms of assembly, in the presence of PdxT, forms a dodecamer of heterodimers.

The enzyme catalyses aldehydo-D-ribose 5-phosphate + D-glyceraldehyde 3-phosphate + L-glutamine = pyridoxal 5'-phosphate + L-glutamate + phosphate + 3 H2O + H(+). Its pathway is cofactor biosynthesis; pyridoxal 5'-phosphate biosynthesis. Its function is as follows. Catalyzes the formation of pyridoxal 5'-phosphate from ribose 5-phosphate (RBP), glyceraldehyde 3-phosphate (G3P) and ammonia. The ammonia is provided by the PdxT subunit. Can also use ribulose 5-phosphate and dihydroxyacetone phosphate as substrates, resulting from enzyme-catalyzed isomerization of RBP and G3P, respectively. This Staphylococcus aureus (strain Mu3 / ATCC 700698) protein is Pyridoxal 5'-phosphate synthase subunit PdxS.